The following is a 30-amino-acid chain: Cycloviolacin-O1 (30 aa).

Positions 1–30 (GIPCAESCVYIPCTVTALLGCSCSNRVCYN) form a cross-link, cyclopeptide (Gly-Asn). 3 disulfide bridges follow: Cys4–Cys21, Cys8–Cys23, and Cys13–Cys28.

Post-translationally, this is a cyclic peptide. As to expression, expressed in leaves, petals, petioles and roots but not in runners (at protein level).

In terms of biological role, probably participates in a plant defense mechanism. This chain is Cycloviolacin-O1, found in Viola odorata (Sweet violet).